Reading from the N-terminus, the 527-residue chain is Succinate-semialdehyde dehydrogenase, mitochondrial (527 aa).

The N-terminal 35 residues, 1–35 (MAMAMAMRRAAALGARHILAASSTSSSGVLLRRHM), are a transit peptide targeting the mitochondrion. Residues R208, 223-226 (KPSE), and 276-281 (GSTAVG) contribute to the NAD(+) site. R208 lines the substrate pocket. Residue E298 is the Proton acceptor of the active site. Positions 326, 332, and 489 each coordinate substrate. C332 acts as the Nucleophile in catalysis. A disulfide bond links C332 and C334.

Belongs to the aldehyde dehydrogenase family. As to quaternary structure, homotetramer.

The protein resides in the mitochondrion matrix. It carries out the reaction succinate semialdehyde + NAD(+) + H2O = succinate + NADH + 2 H(+). It functions in the pathway amino-acid degradation; 4-aminobutanoate degradation. With respect to regulation, redox-regulated. Inhibited under oxydizing conditions. Oxidizes specifically succinate semialdehyde. Involved in plant response to environmental stress by preventing the accumulation of reactive oxygen species. In Oryza sativa subsp. japonica (Rice), this protein is Succinate-semialdehyde dehydrogenase, mitochondrial (ALDH5F1).